The primary structure comprises 90 residues: MARMVKCIKLGREAEGLDFPPYPGPLGKRLWEEVSKEAWADWMKQQTMLVNENRLNLADARARQYLARQMEKHFFGDGADAVQGYVPPSA.

This sequence belongs to the Fe(2+)-trafficking protein family.

In terms of biological role, could be a mediator in iron transactions between iron acquisition and iron-requiring processes, such as synthesis and/or repair of Fe-S clusters in biosynthetic enzymes. The chain is Probable Fe(2+)-trafficking protein from Polaromonas sp. (strain JS666 / ATCC BAA-500).